The chain runs to 68 residues: Large ribosomal subunit protein bL35 (68 aa).

The protein belongs to the bacterial ribosomal protein bL35 family.

In Rickettsia akari (strain Hartford), this protein is Large ribosomal subunit protein bL35.